A 475-amino-acid chain; its full sequence is Mucin-1 (475 aa).

The N-terminal stretch at 1 to 23 is a signal peptide; it reads MTPGTQSLFFLLLLLTVLTVVTG. The disordered stretch occupies residues 23–252; that stretch reads GSGHASSTPG…SPLTSSNHST (230 aa). Topologically, residues 24–380 are extracellular; that stretch reads SGHASSTPGG…QSGAGVPGWG (357 aa). Polar residues predominate over residues 38–48; the sequence is SATQRSSMPSS. The segment covering 54–75 has biased composition (low complexity); the sequence is VSMTSSVLSSHSPGSGSSTTQG. 5 consecutive repeat copies span residues 86–105, 106–125, 126–145, 146–165, and 166–185. The 5 X 20 AA approximate tandem repeats stretch occupies residues 86-185; the sequence is PASGSAATWG…HNVTSASGSA (100 aa). The span at 90 to 102 shows a compositional bias: polar residues; the sequence is SAATWGQDVTSVP. O-linked (GalNAc...) threonine glycans are attached at residues Thr-93 and Thr-99. The O-linked (GalNAc...) serine glycan is linked to Ser-100. Thr-104 is a glycosylation site (O-linked (GalNAc...) threonine). Residues 109-122 show a composition bias toward polar residues; sequence GSTTSPAQDVTSAP. An N-linked (GlcNAc...) asparagine glycan is attached at Asn-177. Low complexity predominate over residues 180–190; sequence SASGSASGSAS. Composition is skewed to polar residues over residues 191–213 and 233–252; these read TLVH…TPFS and DASS…NHST. 4 N-linked (GlcNAc...) asparagine glycosylation sites follow: Asn-195, Asn-249, Asn-275, and Asn-353. Residues 259–368 enclose the SEA domain; sequence GVSFFFLSFH…VSVSDVPFPF (110 aa). Residues 381 to 401 traverse the membrane as a helical segment; the sequence is IALLVLVCVLVALAIVYLIAL. The Cytoplasmic segment spans residues 402 to 475; sequence AVCQCRRKNY…PAVAATSANL (74 aa). 2 S-palmitoyl cysteine lipidation sites follow: Cys-404 and Cys-406. Residues 412–448 are interaction with P53; sequence GQLDIFPARDAYHPMSEYPTYHTHGRYVPPSSTNRSP. A Phosphotyrosine; by PDGFR modification is found at Tyr-423. Positions 423-426 match the Interaction with GRB2 motif; it reads YHPM. Tyr-432 bears the Phosphotyrosine mark. The segment at 435–460 is disordered; that stretch reads HGRYVPPSSTNRSPYEKVSEGNGGSS. Tyr-438 carries the phosphotyrosine; by PDGFR modification. Residues 443–450 are required for interaction with GSK3B; that stretch reads STNRSPYE. Residue Thr-444 is modified to Phosphothreonine; by PKC/PRKCD. Ser-447 is modified (phosphoserine; by GSK3-beta). Tyr-449 carries the phosphotyrosine; by CSK, EGFR and SRC modification. Positions 449 to 452 match the Interaction with SRC and ESR1 motif; it reads YEKV. The required for interaction with beta- and gamma-catenins stretch occupies residues 453 to 461; sequence SEGNGGSSL. Position 463 is a phosphotyrosine (Tyr-463). A Required for interaction with AP1S2 motif is present at residues 463-466; the sequence is YTNP.

The alpha subunit forms a tight, non-covalent heterodimeric complex with the proteolytically-released beta-subunit. Binds directly the SH2 domain of GRB2, and forms a MUC1/GRB2/SOS1 complex involved in RAS signaling. The cytoplasmic tail (MUC1CT) interacts with several proteins such as SRC, CTNNB1 and ERBs. Interaction with the SH2 domain of CSK decreases interaction with GSK3B. Interacts with CTNNB1/beta-catenin and JUP/gamma-catenin and promotes cell adhesion. Interaction with JUP/gamma-catenin is induced by heregulin. Binds PRKCD, ERBB2, ERBB3 and ERBB4. Heregulin (HRG) stimulates the interaction with ERBB2 and, to a much lesser extent, the interaction with ERBB3 and ERBB4. Interacts with P53 in response to DNA damage. Interacts with KLF4. Interacts with estrogen receptor alpha/ESR1, through its DNA-binding domain, and stimulates its transcription activity. Binds ADAM17. Post-translationally, probably both N- and O-glycosylated (in repeat region). In terms of processing, proteolytic cleavage in the SEA domain occurs in the endoplasmic reticulum by an autoproteolytic mechanism and requires the full-length SEA domain as well as requiring a Ser, Thr or Cys residue at the P + 1 site. Ectodomain shedding is mediated by ADAM17 in uterine epithelial cells. Dual palmitoylation on cysteine residues in the CQC motif is required for recycling from endosomes back to the plasma membrane. Post-translationally, phosphorylated on tyrosines and serine residues in the C-terminal. Phosphorylation on tyrosines in the C-terminal increases the nuclear location of MUC1 and beta-catenin. Phosphorylation by PKC delta induces binding of MUC1 to beta-catenin/CTNNB1 and thus decreases the formation of the beta-catenin/E-cadherin complex. Src-mediated phosphorylation inhibits interaction with GSK3B. Csk- or Src- or EGFR-mediated phosphorylation on Tyr-449 increases binding to beta-catenin/CTNNB1. GSK3B-mediated phosphorylation on Ser-447 decreases this interaction but restores the formation of the beta-cadherin/E-cadherin complex. On T-cell receptor activation, phosphorylated by LCK. PDGFR-mediated phosphorylation increases nuclear colocalization of MUC1CT and CTNNB1.

The protein resides in the apical cell membrane. It is found in the cell membrane. Its subcellular location is the cytoplasm. It localises to the nucleus. The alpha subunit has cell adhesive properties. Can act both as an adhesion and an anti-adhesion protein. May provide a protective layer on epithelial cells against bacterial and enzyme attack. Functionally, the beta subunit contains a C-terminal domain which is involved in cell signaling, through phosphorylations and protein-protein interactions. Modulates signaling in ERK, Src and NF-kappaB pathways. In activated T-cells, influences directly or indirectly the Ras/MAPK pathway. Promotes tumor progression. Regulates P53-mediated transcription and determines cell fate in the genotoxic stress response. Binds, together with KLF4, the PE21 promoter element of P53 and represses P53 activity. This Hylobates lar (Lar gibbon) protein is Mucin-1 (MUC1).